A 102-amino-acid polypeptide reads, in one-letter code: Large ribosomal subunit protein bL21 (102 aa).

It belongs to the bacterial ribosomal protein bL21 family. As to quaternary structure, part of the 50S ribosomal subunit. Contacts protein L20.

Its function is as follows. This protein binds to 23S rRNA in the presence of protein L20. This is Large ribosomal subunit protein bL21 from Phytoplasma mali (strain AT).